Consider the following 347-residue polypeptide: Succinylglutamate desuccinylase (347 aa).

3 residues coordinate Zn(2+): H64, E67, and H159. E222 is an active-site residue.

This sequence belongs to the AspA/AstE family. Succinylglutamate desuccinylase subfamily. Zn(2+) is required as a cofactor.

The catalysed reaction is N-succinyl-L-glutamate + H2O = L-glutamate + succinate. It participates in amino-acid degradation; L-arginine degradation via AST pathway; L-glutamate and succinate from L-arginine: step 5/5. Transforms N(2)-succinylglutamate into succinate and glutamate. This Burkholderia cenocepacia (strain ATCC BAA-245 / DSM 16553 / LMG 16656 / NCTC 13227 / J2315 / CF5610) (Burkholderia cepacia (strain J2315)) protein is Succinylglutamate desuccinylase.